A 359-amino-acid polypeptide reads, in one-letter code: Peptide chain release factor 1 (359 aa).

Residue Gln232 is modified to N5-methylglutamine.

It belongs to the prokaryotic/mitochondrial release factor family. Methylated by PrmC. Methylation increases the termination efficiency of RF1.

The protein localises to the cytoplasm. Its function is as follows. Peptide chain release factor 1 directs the termination of translation in response to the peptide chain termination codons UAG and UAA. In Lawsonia intracellularis (strain PHE/MN1-00), this protein is Peptide chain release factor 1.